A 512-amino-acid polypeptide reads, in one-letter code: Gamma-aminobutyric acid receptor subunit beta-2 (512 aa).

A signal peptide spans 1–25 (MWRVRKRGYFGIWSFPLIIAAVCAQ). Residues 26–241 (SVNDPSNMSL…LSLSFKLKRN (216 aa)) lie on the Extracellular side of the membrane. 2 N-linked (GlcNAc...) asparagine glycosylation sites follow: Asn-32 and Asn-104. Tyr-121 contacts histamine. Residues Cys-160 and Cys-174 are joined by a disulfide bond. Residue Asn-173 is glycosylated (N-linked (GlcNAc...) asparagine). Residues 180–181 (SY) and Thr-226 each bind histamine. Tyr-181 and Thr-226 together coordinate 4-aminobutanoate. A helical transmembrane segment spans residues 242–262 (IGYFILQTYMPSILITILSWV). At 263–272 (SFWINYDASA) the chain is on the cytoplasmic side. A helical transmembrane segment spans residues 273 to 292 (ARVALGITTVLTMTTINTHL). Residues 293–310 (RETLPKIPYVKAIDMYLM) lie on the Extracellular side of the membrane. A helical membrane pass occupies residues 311–331 (GCFVFVFMALLEYALVNYIFF). Over 332–490 (GRGPQRQKKA…LTDVNAIDRW (159 aa)) the chain is Cytoplasmic. Tyr-441 is modified (phosphotyrosine). The helical transmembrane segment at 491 to 511 (SRIFFPVVFSFFNIVYWLYYV) threads the bilayer. A topological domain (extracellular) is located at residue Asn-512.

It belongs to the ligand-gated ion channel (TC 1.A.9) family. Gamma-aminobutyric acid receptor (TC 1.A.9.5) subfamily. GABRB2 sub-subfamily. In terms of assembly, heteropentamer, formed by a combination of alpha (GABRA1-6), beta (GABRB1-3), gamma (GABRG1-3), delta (GABRD), epsilon (GABRE), rho (GABRR1-3), pi (GABRP) and theta (GABRQ) chains, each subunit exhibiting distinct physiological and pharmacological properties. Interacts with UBQLN1. May interact with KIF21B. Identified in a complex of 720 kDa composed of LHFPL4, NLGN2, GABRA1, GABRB2, GABRG2 and GABRB3. Isoform 1 and isoform 2 show reduced expression in schizophrenic brain. Isoform 3 shows increased expression in schizophrenic and bipolar disorder brains while isoform 4 shows reduced expression.

It localises to the postsynaptic cell membrane. The protein localises to the cell membrane. Its subcellular location is the cytoplasmic vesicle membrane. The catalysed reaction is chloride(in) = chloride(out). Allosterically activated by benzodiazepines. Allosterically activated by the anesthetic etomidate. Inhibited by the antagonist bicuculline. Potentiated by histamine. Functionally, beta subunit of the heteropentameric ligand-gated chloride channel gated by gamma-aminobutyric acid (GABA), a major inhibitory neurotransmitter in the brain. GABA-gated chloride channels, also named GABA(A) receptors (GABAAR), consist of five subunits arranged around a central pore and contain GABA active binding site(s) located at the alpha and beta subunit interface(s). When activated by GABA, GABAARs selectively allow the flow of chloride anions across the cell membrane down their electrochemical gradient. Chloride influx into the postsynaptic neuron following GABAAR opening decreases the neuron ability to generate a new action potential, thereby reducing nerve transmission. GABAARs containing alpha-1 and beta-2 or -3 subunits exhibit synaptogenic activity; the gamma-2 subunit being necessary but not sufficient to induce rapid synaptic contacts formation. Extrasynaptic beta-2 receptors contribute to the tonic GABAergic inhibition. Beta-containing GABAARs can simultaneously bind GABA and histamine where histamine binds at the interface of two neighboring beta subunits, which may be involved in the regulation of sleep and wakefulness. This is Gamma-aminobutyric acid receptor subunit beta-2 from Homo sapiens (Human).